The primary structure comprises 186 residues: Glutathione S-transferase 1, isoform A (186 aa).

The 81-residue stretch at 1-81 (MDFYYLPGSA…YLVEKYCAHD (81 aa)) folds into the GST N-terminal domain. Residues serine 9, 50 to 52 (HCI), and 65 to 67 (ESR) each bind glutathione. In terms of domain architecture, GST C-terminal spans 92–186 (DPRRRAVVHQ…RRCRVRSAAI (95 aa)).

Belongs to the GST superfamily. Theta family. As to quaternary structure, homodimer.

The enzyme catalyses RX + glutathione = an S-substituted glutathione + a halide anion + H(+). Conjugation of reduced glutathione to a wide number of exogenous and endogenous hydrophobic electrophiles. The protein is Glutathione S-transferase 1, isoform A of Anopheles gambiae (African malaria mosquito).